Consider the following 244-residue polypeptide: Putative lipoprotein LprA (244 aa).

The signal sequence occupies residues 1–24 (MKHPPCSVVAAATAILAVVLAIGG). C25 is lipidated: N-palmitoyl cysteine. The S-diacylglycerol cysteine moiety is linked to residue C25.

Belongs to the LppX/LprAFG lipoprotein family.

The protein localises to the cell membrane. The protein is Putative lipoprotein LprA (lprA) of Mycobacterium bovis (strain ATCC BAA-935 / AF2122/97).